The primary structure comprises 205 residues: Glycerol-3-phosphate acyltransferase (205 aa).

6 helical membrane passes run 8–28 (IALF…GYLA), 57–77 (TPAL…ILIA), 84–104 (ESLQ…PVWL), 118–138 (VFLG…LLIL), 143–163 (IVSL…LINS), and 164–184 (KETF…LVLW).

Belongs to the PlsY family. As to quaternary structure, probably interacts with PlsX.

The protein localises to the cell inner membrane. It catalyses the reaction an acyl phosphate + sn-glycerol 3-phosphate = a 1-acyl-sn-glycero-3-phosphate + phosphate. It functions in the pathway lipid metabolism; phospholipid metabolism. Catalyzes the transfer of an acyl group from acyl-phosphate (acyl-PO(4)) to glycerol-3-phosphate (G3P) to form lysophosphatidic acid (LPA). This enzyme utilizes acyl-phosphate as fatty acyl donor, but not acyl-CoA or acyl-ACP. This chain is Glycerol-3-phosphate acyltransferase, found in Prochlorococcus marinus (strain SARG / CCMP1375 / SS120).